The primary structure comprises 2326 residues: Probable voltage-dependent N-type calcium channel subunit alpha-1B (2326 aa).

Over 1–83 (MARLGNDVPA…DNIIRKYAKR (83 aa)) the chain is Cytoplasmic. The tract at residues 17-37 (AGGGRGANRHAGPQAGQRGMY) is disordered. One copy of the I repeat lies at 75–351 (NIIRKYAKRI…LVLGVLSGEF (277 aa)). Residues 84 to 107 (ITEWPPFEYMILATIIANCIVLAL) traverse the membrane as a helical segment. The Extracellular portion of the chain corresponds to 108-124 (EQHLPDGDKTPMSERLD). A helical transmembrane segment spans residues 125–145 (DTEPYFIGIFCFEAGIKIIAL). Over 146-156 (GFAFHKGSYLR) the chain is Cytoplasmic. The chain crosses the membrane as a helical span at residues 157–175 (NGWNVMDFVVVLTGILTTI). Topologically, residues 176–180 (GTDFD) are extracellular. A helical membrane pass occupies residues 181 to 204 (LRTLRAVRVLRPLKLVSGIPSLQV). The Cytoplasmic segment spans residues 205-214 (VLKSIMKAMV). The helical transmembrane segment at 215–237 (PLLQIGLLLFFAILMFAIIGLEF) threads the bilayer. Topologically, residues 238 to 323 (YMGKFHKTCF…TANDALGNTW (86 aa)) are extracellular. The N-linked (GlcNAc...) asparagine glycan is linked to Asn-271. A helical membrane pass occupies residues 324–348 (NWLYFIPLIVIGSFFMLNLVLGVLS). Residues 349-472 (GEFAKERERV…FFIRRMVKSQ (124 aa)) are Cytoplasmic-facing. Positions 371 to 388 (QQVEQEFNRYLRWIHIAE) are binding to the beta subunit. The II repeat unit spans residues 458-702 (EKRFRFFIRR…VFLAIAVDNL (245 aa)). Residues 473–491 (SFYWIVLCLVGLNTLCVAI) form a helical membrane-spanning segment. Residues 492-501 (VHYDQPPLLT) are Extracellular-facing. Residues 502-524 (DALYFAEFVFLGLFLTEMSLKMY) form a helical membrane-spanning segment. The Cytoplasmic portion of the chain corresponds to 525-534 (GLGPRNYFHS). Ser-534 provides a ligand contact to a 1,2-diacyl-sn-glycero-3-phospho-(1D-myo-inositol-4,5-bisphosphate). The chain crosses the membrane as a helical span at residues 535–556 (SFNCFDFGVIVGSIFEVVWTAV). At 557 to 563 (KPDTSFG) the chain is on the extracellular side. Residues 564–576 (ISVLRALRLLRIF) traverse the membrane as a helical segment. The a 1,2-diacyl-sn-glycero-3-phospho-(1D-myo-inositol-4,5-bisphosphate) site is built by Arg-574 and Lys-577. At 577-594 (KVTKYWNSLRNLVVSLLN) the chain is on the cytoplasmic side. Residues 595–620 (SMKSIISLLFLLFLFIVVFALLGMQL) form a helical membrane-spanning segment. The Extracellular portion of the chain corresponds to 621 to 672 (FGGQFNFEDGTPPTNFDTFPAAILTVFQILTGEDWNEVMYYGIEAHGGVKKG). Residues 673–699 (MFSSVYFIILTLFGNYTLLNVFLAIAV) form a helical membrane-spanning segment. Residues 700-1148 (DNLANAQELT…ACHYIVNLRY (449 aa)) are Cytoplasmic-facing. The segment at 793 to 1048 (SHQIRPDMKT…LQHLPQQPED (256 aa)) is disordered. Basic and acidic residues-rich tracts occupy residues 796–808 (IRPD…DRPL), 854–879 (KLGE…DDKR), 886–908 (SKET…SHEG), 935–979 (HGTE…EGAE), and 994–1011 (SEEK…VLRE). The segment covering 1020 to 1032 (TQPSQDSGTQGNV) has biased composition (polar residues). Residues 1134 to 1416 (NPVRRACHYI…IFVALIIITF (283 aa)) form an III repeat. A helical membrane pass occupies residues 1149–1167 (FEMCILLVITMSSIALAAE). At 1168-1175 (DPVQGDAP) the chain is on the extracellular side. A helical transmembrane segment spans residues 1176-1200 (RNNVLKYLDYVFTGVFTFEMVIKMI). The Cytoplasmic segment spans residues 1201-1214 (NLGLILHPGSYFRD). The chain crosses the membrane as a helical span at residues 1215 to 1235 (LWNILDFIVVSGALVAFAFTG). At 1236-1241 (SRGKDL) the chain is on the extracellular side. A helical transmembrane segment spans residues 1242-1262 (NTIKSLRVLRVLRPLKTIKRL). Over 1263-1280 (PKLKAVFDCVVNSLKNVL) the chain is Cytoplasmic. Residues 1281–1300 (NILIVYMLFMFIFAVIAVQL) form a helical membrane-spanning segment. Topologically, residues 1301–1387 (FKGKFFYCTD…DQGPSPSYRM (87 aa)) are extracellular. A helical transmembrane segment spans residues 1388-1413 (EMSIFYVVYFVVFPFFFVNIFVALII). The Cytoplasmic portion of the chain corresponds to 1414 to 1468 (ITFQEQGDKVMSDCSLEKNERACIDFAISAKPLTRYMPQNKQTFQYKMWKFVVSP). An IV repeat occupies 1453–1708 (NKQTFQYKMW…LFVAVIMDNF (256 aa)). The chain crosses the membrane as a helical span at residues 1469 to 1487 (PFEYLIMALIALNTIVLMM). The Extracellular segment spans residues 1488-1495 (KFYNAPDP). The helical transmembrane segment at 1496–1520 (YDRMLQYLNILFTFLFSMECVLKLI) threads the bilayer. The Cytoplasmic segment spans residues 1521–1530 (GFGVLNYFRD). Residues 1531–1552 (AWNVFDFVTVLGSITDILVTEL) form a helical membrane-spanning segment. Over 1553 to 1558 (ADSFIN) the chain is Extracellular. Residue Asn-1558 is glycosylated (N-linked (GlcNAc...) asparagine). The chain crosses the membrane as a helical span at residues 1559-1577 (LSFLRLFRAARLIKLLRQG). The Cytoplasmic portion of the chain corresponds to 1578–1596 (YTIRILLWTFVQSFKALPY). Residues 1597–1616 (VCLLIAMLFFIYAIIGMQVF) form a helical membrane-spanning segment. Over 1617–1680 (GNIELDDDGA…IDGDECGSNF (64 aa)) the chain is Extracellular. The helical transmembrane segment at 1681–1704 (AYFYFVSFIFFSSFLMLNLFVAVI) threads the bilayer. Residues 1705–2326 (MDNFEYLTRD…YRETDEDDWC (622 aa)) lie on the Cytoplasmic side of the membrane. Residues 1721-1756 (HHLDEFIRVWAEYDPGARGRITYNDMYEMLRHMCPP) form the EF-hand domain. Ca(2+) is bound by residues Asp-1734, Arg-1740, and Asp-1745. A compositionally biased stretch (polar residues) spans 1897-1912 (EEPSSYSTSHKNSVNP). 4 disordered regions span residues 1897–1916 (EEPS…LYQG), 1932–1954 (CAEG…KSSS), 2039–2242 (PHHH…SSDP), and 2271–2326 (TTAT…DDWC). The segment covering 1932–1948 (CAEGKKEVPESHPEEAG) has biased composition (basic and acidic residues). A compositionally biased stretch (basic residues) spans 2039–2055 (PHHHHHHHRCHHRREKK). Composition is skewed to basic and acidic residues over residues 2056–2069 (QRSL…HADE) and 2077–2104 (QLRD…EKQR). Composition is skewed to polar residues over residues 2142–2161 (GSGS…STPS), 2275–2289 (GRSP…QPPQ), and 2302–2311 (GRSTGPSTAA).

It belongs to the calcium channel alpha-1 subunit (TC 1.A.1.11) family. In terms of assembly, multisubunit complex consisting of alpha-1, alpha-2, beta and delta subunits in a 1:1:1:1 ratio. The channel activity is directed by the pore-forming and voltage-sensitive alpha-1 subunit. In many cases, this subunit is sufficient to generate voltage-sensitive calcium channel activity. The auxiliary subunits beta and alpha-2/delta linked by a disulfide bridge regulate the channel activity. Phosphorylated in vitro by CaM-kinase II, PKA, PKC and CGPK. Expression is higher in the electric lobe than in the forebrain.

Its subcellular location is the membrane. In terms of biological role, the isoform alpha-1B gives rise to N-type calcium currents. N-type calcium channels belong to the 'high-voltage activated' (HVA) group. The chain is Probable voltage-dependent N-type calcium channel subunit alpha-1B from Diplobatis ommata (Ocellated electric ray).